Reading from the N-terminus, the 76-residue chain is Parvalbumin beta 3 (76 aa).

Residue Ala1 is modified to N-acetylalanine. Residues 31-66 form the EF-hand domain; it reads KSPEEVKKFFAIIDQDHSGFIEEEELKLFLQTFSAG. Asp44, Asp46, Ser48, Phe50, Glu52, and Glu55 together coordinate Ca(2+).

The protein belongs to the parvalbumin family.

Functionally, in muscle, parvalbumin is thought to be involved in relaxation after contraction. It binds two calcium ions. In Merluccius polylepis (Southern hake), this protein is Parvalbumin beta 3.